The primary structure comprises 1109 residues: DNA mismatch repair protein MSH7 (1109 aa).

2 disordered regions span residues 19–45 (TKGLVSGDAASGGGGSGGPRFNVKEGD) and 61–86 (DEVRGTDTPPEKVPRRVLPSGFKPAE). Residues 61 to 74 (DEVRGTDTPPEKVP) are compositionally biased toward basic and acidic residues. Residue 853–860 (GPNMGGKS) coordinates ATP.

It belongs to the DNA mismatch repair MutS family. Heterodimer consisting of MSH2-MSH7 (MutS gamma).

The protein localises to the nucleus. In terms of biological role, component of the post-replicative DNA mismatch repair system (MMR). Forms the heterodimer MutS gamma (MSH2-MSH7 heterodimer) which binds to DNA mismatches thereby initiating DNA repair. MutS gamma recognizes specifically the T/G single base mismatch, but not trinucleotide insertion-deletion loops (IDL). The chain is DNA mismatch repair protein MSH7 (MSH7) from Arabidopsis thaliana (Mouse-ear cress).